The primary structure comprises 488 residues: GTPase Der (488 aa).

2 consecutive EngA-type G domains span residues 3 to 166 (PVVA…AEAM) and 199 to 372 (IKLA…DSAT). GTP is bound by residues 9–16 (GRPNVGKS), 56–60 (DTGGI), 118–121 (NKVD), 205–212 (GKPNVGKS), 252–256 (DTAGV), and 317–320 (NKWD). Residues 373 to 457 (RRVSTSMLTR…PIQLRFQEGD (85 aa)) enclose the KH-like domain. The interval 460 to 488 (FENKTEKLTMSQERRRKRAQSHIKDRKTK) is disordered. The span at 473–488 (RRRKRAQSHIKDRKTK) shows a compositional bias: basic residues.

It belongs to the TRAFAC class TrmE-Era-EngA-EngB-Septin-like GTPase superfamily. EngA (Der) GTPase family. As to quaternary structure, associates with the 50S ribosomal subunit.

Its function is as follows. GTPase that plays an essential role in the late steps of ribosome biogenesis. The sequence is that of GTPase Der from Shewanella baltica (strain OS155 / ATCC BAA-1091).